The sequence spans 118 residues: uncharacterized protein (118 aa).

The interval 1–49 (MDYVGGSLKLKNVKKKPLKKKKKDSKKLAEKVQEHSSRDKSPLEENGVS) is disordered. Residues 11–25 (KNVKKKPLKKKKKDS) are compositionally biased toward basic residues. Residues 26–43 (KKLAEKVQEHSSRDKSPL) show a composition bias toward basic and acidic residues.

This is an uncharacterized protein from Schizosaccharomyces pombe (strain 972 / ATCC 24843) (Fission yeast).